A 482-amino-acid polypeptide reads, in one-letter code: tRNA sulfurtransferase (482 aa).

The THUMP domain maps to 61–165; that stretch reads DLVRDALTRI…DDRLLLVRGR (105 aa). ATP contacts are provided by residues 183–184, lysine 265, glycine 287, and glutamine 296; that span reads LI. Cysteine 344 and cysteine 456 are oxidised to a cystine. Positions 404 to 482 constitute a Rhodanese domain; sequence LAEGDVVLDI…GYDNVRVYRP (79 aa). The active-site Cysteine persulfide intermediate is cysteine 456.

This sequence belongs to the ThiI family.

Its subcellular location is the cytoplasm. It catalyses the reaction [ThiI sulfur-carrier protein]-S-sulfanyl-L-cysteine + a uridine in tRNA + 2 reduced [2Fe-2S]-[ferredoxin] + ATP + H(+) = [ThiI sulfur-carrier protein]-L-cysteine + a 4-thiouridine in tRNA + 2 oxidized [2Fe-2S]-[ferredoxin] + AMP + diphosphate. It carries out the reaction [ThiS sulfur-carrier protein]-C-terminal Gly-Gly-AMP + S-sulfanyl-L-cysteinyl-[cysteine desulfurase] + AH2 = [ThiS sulfur-carrier protein]-C-terminal-Gly-aminoethanethioate + L-cysteinyl-[cysteine desulfurase] + A + AMP + 2 H(+). It functions in the pathway cofactor biosynthesis; thiamine diphosphate biosynthesis. Catalyzes the ATP-dependent transfer of a sulfur to tRNA to produce 4-thiouridine in position 8 of tRNAs, which functions as a near-UV photosensor. Also catalyzes the transfer of sulfur to the sulfur carrier protein ThiS, forming ThiS-thiocarboxylate. This is a step in the synthesis of thiazole, in the thiamine biosynthesis pathway. The sulfur is donated as persulfide by IscS. This Edwardsiella ictaluri (strain 93-146) protein is tRNA sulfurtransferase.